The following is a 375-amino-acid chain: Ketohexokinase (375 aa).

Asp-319 contacts beta-D-fructose.

This sequence belongs to the carbohydrate kinase PfkB family. Homodimer.

The catalysed reaction is beta-D-fructose + ATP = beta-D-fructose 1-phosphate + ADP + H(+). It participates in carbohydrate metabolism; fructose metabolism. Its activity is regulated as follows. Activated in the presence of 0.5 M KCl. 85% activity at 3.5 M KCl. 60% activity without KCl. Functionally, catalyzes the ATP-dependent phosphorylation of the ketose sugar fructose to fructose-1-phosphate. Does not produce fructose-6-phosphate. The sugars D-glucose, D-galactose, L-rhamnose, D-xylose, L-arabinose and D-ribose are not substrates of this enzyme. This chain is Ketohexokinase, found in Haloferax volcanii (strain ATCC 29605 / DSM 3757 / JCM 8879 / NBRC 14742 / NCIMB 2012 / VKM B-1768 / DS2) (Halobacterium volcanii).